Reading from the N-terminus, the 503-residue chain is uncharacterized protein (503 aa).

This sequence belongs to the Mg-chelatase subunits D/I family. ComM subfamily.

This is an uncharacterized protein from Mycobacterium tuberculosis (strain CDC 1551 / Oshkosh).